The primary structure comprises 841 residues: Axin-1 (841 aa).

The segment at 1-78 (MNIQGKGFPL…GYEPEGSASP (78 aa)) is disordered. Polar residues predominate over residues 44 to 61 (FYSSKSDAVRNETSTATP). An RGS domain is found at 88–211 (SLHSLLDDQD…LKSDIYLEYT (124 aa)). Positions 217 to 269 (SPKIYSDPSSGSGTGKGLPGYLPTLNEDEEWKCDQDTEPEASRDSAPSSRLTQ) are disordered. Residues 248–259 (KCDQDTEPEASR) are compositionally biased toward basic and acidic residues. Residues 348 to 433 (LRKQHRREMQ…DADISSGPSV (86 aa)) form an interaction with GSK3B region. Positions 434-508 (ISHKMPSAQP…RSPESGHLGK (75 aa)) are interaction with beta-catenin. Disordered regions lie at residues 482–527 (KTPG…TTKS), 613–635 (NIKKTDSGKSDGANYEMPGSPED), and 727–756 (RRLEEEEKRAGKLPLKQRLKPQKRPGSGAS). The span at 727–736 (RRLEEEEKRA) shows a compositional bias: basic and acidic residues. The region spanning 759–841 (CENIVVAYYF…KIIGKVEKID (83 aa)) is the DIX domain.

In terms of assembly, homodimer. Post-translationally, ADP-ribosylated by tankyrase TNKS and TNKS2. Poly-ADP-ribosylated protein is recognized by RNF146, followed by ubiquitination at 'Lys-48' and subsequent activation of the Wnt signaling pathway. In terms of processing, ubiquitinated by RNF146 when poly-ADP-ribosylated, leading to its degradation and subsequent activation of the Wnt signaling pathway.

It localises to the cytoplasm. The protein localises to the nucleus. It is found in the membrane. The protein resides in the cell membrane. Its function is as follows. Component of the beta-catenin destruction complex required for regulating CTNNB1 levels through phosphorylation and ubiquitination, and modulating Wnt-signaling. Controls dorsoventral patterning via two opposing effects; down-regulates CTNNB1 to inhibit the Wnt signaling pathway and ventralize embryos, but also dorsalizes embryos by activating a Wnt-independent JNK signaling pathway. The protein is Axin-1 (AXIN1) of Gallus gallus (Chicken).